The chain runs to 144 residues: Histone H3.1 (144 aa).

The segment at 1–45 (MARTKQSARKTTGGKAPRKQLSAKSARKGVSPASSAGAKKSRYRP) is disordered. Residue lysine 5 is modified to N6,N6,N6-trimethyllysine; alternate. An N6,N6-dimethyllysine; alternate modification is found at lysine 5. Residues lysine 5 and lysine 10 each carry the N6-methyllysine; alternate modification. N6-acetyllysine; alternate is present on residues lysine 10, lysine 15, lysine 19, lysine 24, lysine 28, and lysine 39. An N6,N6-dimethyllysine; alternate modification is found at lysine 15. Lysine 19, lysine 24, lysine 28, and lysine 39 each carry N6-methyllysine; alternate. Residues lysine 28 and lysine 39 each carry the N6,N6,N6-trimethyllysine; alternate modification. N6,N6-dimethyllysine; alternate occurs at positions 28 and 39. Residue lysine 58 is modified to N6-acetyllysine.

This sequence belongs to the histone H3 family. In terms of assembly, the nucleosome is a histone octamer containing two molecules each of H2A, H2B, H3 and H4 assembled in one H3-H4 heterotetramer and two H2A-H2B heterodimers. The octamer wraps approximately 147 bp of DNA. Mono-, di- and trimethylated to form H3K4me1/2/3. H3K4me activates gene expression by regulating transcription elongation and plays a role in telomere length maintenance. H3K4me enrichment correlates with transcription levels, and occurs in a 5' to 3' gradient with H3K4me3 enrichment at the 5'-end of genes, shifting to H3K4me2 and then H3K4me1. H3K36me represses gene expression. Post-translationally, acetylation of histone H3 leads to transcriptional activation.

The protein resides in the nucleus. Its subcellular location is the chromosome. Core component of nucleosome. Nucleosomes wrap and compact DNA into chromatin, limiting DNA accessibility to the cellular machineries which require DNA as a template. Histones thereby play a central role in transcription regulation, DNA repair, DNA replication and chromosomal stability. DNA accessibility is regulated via a complex set of post-translational modifications of histones, also called histone code, and nucleosome remodeling. The sequence is that of Histone H3.1 (HHT1) from Encephalitozoon cuniculi (strain GB-M1) (Microsporidian parasite).